The sequence spans 346 residues: tRNA N6-adenosine threonylcarbamoyltransferase (346 aa).

2 residues coordinate Fe cation: H111 and H115. Substrate-binding positions include L134–G138, D167, G180, and N279. D307 provides a ligand contact to Fe cation.

It belongs to the KAE1 / TsaD family. The cofactor is Fe(2+).

The protein resides in the cytoplasm. It catalyses the reaction L-threonylcarbamoyladenylate + adenosine(37) in tRNA = N(6)-L-threonylcarbamoyladenosine(37) in tRNA + AMP + H(+). Functionally, required for the formation of a threonylcarbamoyl group on adenosine at position 37 (t(6)A37) in tRNAs that read codons beginning with adenine. Is involved in the transfer of the threonylcarbamoyl moiety of threonylcarbamoyl-AMP (TC-AMP) to the N6 group of A37, together with TsaE and TsaB. TsaD likely plays a direct catalytic role in this reaction. The sequence is that of tRNA N6-adenosine threonylcarbamoyltransferase from Burkholderia pseudomallei (strain 1106a).